The sequence spans 497 residues: Glycerol kinase (497 aa).

Threonine 13 serves as a coordination point for ADP. Threonine 13, threonine 14, and serine 15 together coordinate ATP. Threonine 13 contacts sn-glycerol 3-phosphate. Residue arginine 17 coordinates ADP. 3 residues coordinate sn-glycerol 3-phosphate: arginine 83, glutamate 84, and tyrosine 135. Glycerol-binding residues include arginine 83, glutamate 84, and tyrosine 135. Histidine 231 is subject to Phosphohistidine; by HPr. Residue aspartate 245 coordinates sn-glycerol 3-phosphate. Aspartate 245 and glutamine 246 together coordinate glycerol. Threonine 267 and glycine 310 together coordinate ADP. 4 residues coordinate ATP: threonine 267, glycine 310, glutamine 314, and glycine 411. ADP-binding residues include glycine 411 and asparagine 415.

It belongs to the FGGY kinase family. Homotetramer and homodimer (in equilibrium). The phosphoenolpyruvate-dependent sugar phosphotransferase system (PTS), including enzyme I, and histidine-containing protein (HPr) are required for the phosphorylation, which leads to the activation of the enzyme.

The enzyme catalyses glycerol + ATP = sn-glycerol 3-phosphate + ADP + H(+). The protein operates within polyol metabolism; glycerol degradation via glycerol kinase pathway; sn-glycerol 3-phosphate from glycerol: step 1/1. Activated by phosphorylation and inhibited by fructose 1,6-bisphosphate (FBP). In terms of biological role, key enzyme in the regulation of glycerol uptake and metabolism. Catalyzes the phosphorylation of glycerol to yield sn-glycerol 3-phosphate. The sequence is that of Glycerol kinase from Listeria monocytogenes serotype 4b (strain F2365).